Consider the following 350-residue polypeptide: Holliday junction branch migration complex subunit RuvB (350 aa).

The tract at residues 1–183 (MSAERLVNPH…FVAVHRLVFY (183 aa)) is large ATPase domain (RuvB-L). ATP is bound by residues Leu-22, Arg-23, Gly-64, Lys-67, Thr-68, Ser-69, 130–132 (EDF), Arg-173, Tyr-183, and Arg-220. Residue Thr-68 coordinates Mg(2+). The interval 184 to 254 (SDAAMTEIVS…VAREALAQLE (71 aa)) is small ATPAse domain (RuvB-S). The segment at 257 to 350 (ELGLDENDRR…ESGPQQGTLF (94 aa)) is head domain (RuvB-H). Residues Arg-312 and Arg-317 each coordinate DNA.

It belongs to the RuvB family. As to quaternary structure, homohexamer. Forms an RuvA(8)-RuvB(12)-Holliday junction (HJ) complex. HJ DNA is sandwiched between 2 RuvA tetramers; dsDNA enters through RuvA and exits via RuvB. An RuvB hexamer assembles on each DNA strand where it exits the tetramer. Each RuvB hexamer is contacted by two RuvA subunits (via domain III) on 2 adjacent RuvB subunits; this complex drives branch migration. In the full resolvosome a probable DNA-RuvA(4)-RuvB(12)-RuvC(2) complex forms which resolves the HJ.

It is found in the cytoplasm. It catalyses the reaction ATP + H2O = ADP + phosphate + H(+). Its function is as follows. The RuvA-RuvB-RuvC complex processes Holliday junction (HJ) DNA during genetic recombination and DNA repair, while the RuvA-RuvB complex plays an important role in the rescue of blocked DNA replication forks via replication fork reversal (RFR). RuvA specifically binds to HJ cruciform DNA, conferring on it an open structure. The RuvB hexamer acts as an ATP-dependent pump, pulling dsDNA into and through the RuvAB complex. RuvB forms 2 homohexamers on either side of HJ DNA bound by 1 or 2 RuvA tetramers; 4 subunits per hexamer contact DNA at a time. Coordinated motions by a converter formed by DNA-disengaged RuvB subunits stimulates ATP hydrolysis and nucleotide exchange. Immobilization of the converter enables RuvB to convert the ATP-contained energy into a lever motion, pulling 2 nucleotides of DNA out of the RuvA tetramer per ATP hydrolyzed, thus driving DNA branch migration. The RuvB motors rotate together with the DNA substrate, which together with the progressing nucleotide cycle form the mechanistic basis for DNA recombination by continuous HJ branch migration. Branch migration allows RuvC to scan DNA until it finds its consensus sequence, where it cleaves and resolves cruciform DNA. This is Holliday junction branch migration complex subunit RuvB from Chloroflexus aggregans (strain MD-66 / DSM 9485).